We begin with the raw amino-acid sequence, 366 residues long: MSAPRHDLADFVTAQWQRRGWFAWLMLPFSLLFGLIARVRRYGYLHGWFKSTRLPMPVIVVGNVTVGGTGKTPAVIALAQALTEAGLRPGVVSRGYGVTLKHPRRVKPTSKASDVGDEPLLIARAADVPVWVFPDRALCAQTMLVSHPGVNVLLLDDGLQHYRLQRDFEIVMFDSRMGGNGLMLPAGPLREPLSRPRDATLINDPNFRATPERPDVYGMRLDLDEAWQLNDPTMARPVSAFAGRRVLAAAGIGNPERFFASLRGAGLSPKTLPLPDHYDFAEDPFAGNPDALDADVILITEKDAVKCERFDDPRIWVVPTTPVIDAGLIDKIRRAVLARVPAAKSTPASGGATGLNKEHQDGQPAA.

65-72 (TVGGTGKT) provides a ligand contact to ATP. The interval 343–366 (AKSTPASGGATGLNKEHQDGQPAA) is disordered. The span at 356 to 366 (NKEHQDGQPAA) shows a compositional bias: basic and acidic residues.

It belongs to the LpxK family.

It catalyses the reaction a lipid A disaccharide + ATP = a lipid IVA + ADP + H(+). It functions in the pathway glycolipid biosynthesis; lipid IV(A) biosynthesis; lipid IV(A) from (3R)-3-hydroxytetradecanoyl-[acyl-carrier-protein] and UDP-N-acetyl-alpha-D-glucosamine: step 6/6. Transfers the gamma-phosphate of ATP to the 4'-position of a tetraacyldisaccharide 1-phosphate intermediate (termed DS-1-P) to form tetraacyldisaccharide 1,4'-bis-phosphate (lipid IVA). The polypeptide is Tetraacyldisaccharide 4'-kinase (Cupriavidus pinatubonensis (strain JMP 134 / LMG 1197) (Cupriavidus necator (strain JMP 134))).